Consider the following 562-residue polypeptide: Potassium-transporting ATPase potassium-binding subunit (562 aa).

The next 10 membrane-spanning stretches (helical) occupy residues 5–25 (AFLL…PLGS), 63–83 (AAAI…LLMA), 132–152 (GLTV…FALI), 175–195 (LYVL…QGVL), 250–270 (LSNI…CFAF), 279–299 (QGHA…AVVM), 379–399 (GLYG…LMIG), 416–436 (MTAL…ALAL), 483–503 (VLLA…VLAI), and 526–546 (LFIG…FIPA).

Belongs to the KdpA family. In terms of assembly, the system is composed of three essential subunits: KdpA, KdpB and KdpC.

The protein localises to the cell inner membrane. Part of the high-affinity ATP-driven potassium transport (or Kdp) system, which catalyzes the hydrolysis of ATP coupled with the electrogenic transport of potassium into the cytoplasm. This subunit binds the periplasmic potassium ions and delivers the ions to the membrane domain of KdpB through an intramembrane tunnel. This chain is Potassium-transporting ATPase potassium-binding subunit, found in Pectobacterium atrosepticum (strain SCRI 1043 / ATCC BAA-672) (Erwinia carotovora subsp. atroseptica).